Reading from the N-terminus, the 780-residue chain is LPS-assembly protein LptD (780 aa).

Positions 1–24 are cleaved as a signal peptide; sequence MKKRFPTLLATLIWTALYSQHTLA.

It belongs to the LptD family. As to quaternary structure, component of the lipopolysaccharide transport and assembly complex. Interacts with LptE and LptA.

It is found in the cell outer membrane. Functionally, together with LptE, is involved in the assembly of lipopolysaccharide (LPS) at the surface of the outer membrane. This is LPS-assembly protein LptD from Yersinia pestis bv. Antiqua (strain Antiqua).